Here is a 300-residue protein sequence, read N- to C-terminus: Kynurenine formamidase (300 aa).

The HGGXW signature appears at 86 to 90 (HGGYW). The Nucleophile role is filled by Ser-157. Active-site residues include Asp-244 and His-276.

It belongs to the kynurenine formamidase family. Homodimer.

The catalysed reaction is N-formyl-L-kynurenine + H2O = L-kynurenine + formate + H(+). Its pathway is amino-acid degradation; L-tryptophan degradation via kynurenine pathway; L-kynurenine from L-tryptophan: step 2/2. Catalyzes the hydrolysis of N-formyl-L-kynurenine to L-kynurenine, the second step in the kynurenine pathway of tryptophan degradation. Required for elimination of toxic metabolites. This is Kynurenine formamidase (KFase) from Drosophila melanogaster (Fruit fly).